The sequence spans 371 residues: Germination protease (371 aa).

Positions 1–16 (MEKQKLDLSAYQIRTD) are excised as a propeptide.

It belongs to the peptidase A25 family. As to quaternary structure, homotetramer. Post-translationally, autoproteolytically processed. The inactive tetrameric zymogen termed p46 autoprocesses to a smaller form termed p41, which is active only during spore germination.

The catalysed reaction is Endopeptidase action with P4 Glu or Asp, P1 preferably Glu &gt; Asp, P1' hydrophobic and P2' Ala.. Functionally, initiates the rapid degradation of small, acid-soluble proteins during spore germination. This chain is Germination protease, found in Bacillus pumilus (strain SAFR-032).